We begin with the raw amino-acid sequence, 172 residues long: 3-hydroxydecanoyl-[acyl-carrier-protein] dehydratase (172 aa).

Residue H71 is part of the active site.

This sequence belongs to the thioester dehydratase family. FabA subfamily. Homodimer.

The protein resides in the cytoplasm. It catalyses the reaction a (3R)-hydroxyacyl-[ACP] = a (2E)-enoyl-[ACP] + H2O. It carries out the reaction (3R)-hydroxydecanoyl-[ACP] = (2E)-decenoyl-[ACP] + H2O. The catalysed reaction is (2E)-decenoyl-[ACP] = (3Z)-decenoyl-[ACP]. It functions in the pathway lipid metabolism; fatty acid biosynthesis. Functionally, necessary for the introduction of cis unsaturation into fatty acids. Catalyzes the dehydration of (3R)-3-hydroxydecanoyl-ACP to E-(2)-decenoyl-ACP and then its isomerization to Z-(3)-decenoyl-ACP. Can catalyze the dehydratase reaction for beta-hydroxyacyl-ACPs with saturated chain lengths up to 16:0, being most active on intermediate chain length. The sequence is that of 3-hydroxydecanoyl-[acyl-carrier-protein] dehydratase from Salmonella agona (strain SL483).